Reading from the N-terminus, the 322-residue chain is tRNA pseudouridine synthase B (322 aa).

The segment covering 1–11 (MRPPRTTELDR) has biased composition (basic and acidic residues). The disordered stretch occupies residues 1–22 (MRPPRTTELDRPMTTAASQRPR). The Nucleophile role is filled by Asp65.

Belongs to the pseudouridine synthase TruB family. Type 1 subfamily.

The catalysed reaction is uridine(55) in tRNA = pseudouridine(55) in tRNA. Responsible for synthesis of pseudouridine from uracil-55 in the psi GC loop of transfer RNAs. The protein is tRNA pseudouridine synthase B of Burkholderia lata (strain ATCC 17760 / DSM 23089 / LMG 22485 / NCIMB 9086 / R18194 / 383).